A 218-amino-acid chain; its full sequence is Small ribosomal subunit protein uS7m (218 aa).

A mitochondrion-targeting transit peptide spans 1–19 (MSLLGRIAEKTSRLSCLRL).

Belongs to the universal ribosomal protein uS7 family. In terms of assembly, component of the mitochondrial ribosome small subunit (28S) which comprises a 12S rRNA and about 30 distinct proteins.

Its subcellular location is the mitochondrion. The sequence is that of Small ribosomal subunit protein uS7m (mRpS7) from Drosophila melanogaster (Fruit fly).